Here is a 202-residue protein sequence, read N- to C-terminus: Large ribosomal subunit protein bL25 (202 aa).

Residues 182–202 (EVEAEETEDDEAASEGEEAAE) are disordered. The segment covering 183–202 (VEAEETEDDEAASEGEEAAE) has biased composition (acidic residues).

It belongs to the bacterial ribosomal protein bL25 family. CTC subfamily. Part of the 50S ribosomal subunit; part of the 5S rRNA/L5/L18/L25 subcomplex. Contacts the 5S rRNA. Binds to the 5S rRNA independently of L5 and L18.

Its function is as follows. This is one of the proteins that binds to the 5S RNA in the ribosome where it forms part of the central protuberance. The polypeptide is Large ribosomal subunit protein bL25 (Corynebacterium glutamicum (strain R)).